The following is a 313-amino-acid chain: MSSLEKRVFLDMALDEKPIGRIEIKLFTSEAPKTCENFRALCTGEVGMAPNNKARLHYKGNEIHRVVKKFMIQGGDITDGDGRGGFSIYGRYFDDEKFVLKHSKPYLLSMANKGPNSNSSQFFITTAPAPHCNGKHVVFGEVIKGREVVDVLDNLEVDGKSKPIAKVRIFNSGELVKKKKPSKTKEELAALEERKRQEAKKDIPDIPKSWLYRDNEERESDFSSKTESSRVRSRSKSPSNNYETRRGHMANSRGDRNRRTQRADRKDDFGIAVRGRGGVQFRRVRYVTPEHWRRNAPSKWQQGSYTHPVDLQP.

The PPIase cyclophilin-type domain occupies 9-174; it reads FLDMALDEKP…AKVRIFNSGE (166 aa). Basic and acidic residues-rich tracts occupy residues 216–230 and 253–269; these read EERE…ESSR and RGDR…KDDF. Disordered regions lie at residues 216 to 274 and 288 to 313; these read EERE…IAVR and TPEH…DLQP.

It belongs to the cyclophilin-type PPIase family.

The enzyme catalyses [protein]-peptidylproline (omega=180) = [protein]-peptidylproline (omega=0). Functionally, PPIases accelerate the folding of proteins. It catalyzes the cis-trans isomerization of proline imid ic peptide bonds in oligopeptides. Thought to function as a catalyst in the folding and modification of cuticle collagens. The polypeptide is Peptidyl-prolyl cis-trans isomerase 9 (Caenorhabditis briggsae).